Reading from the N-terminus, the 861-residue chain is Leucine--tRNA ligase (861 aa).

Residues 42–52 (PYPSGKLHMGH) carry the 'HIGH' region motif. A 'KMSKS' region motif is present at residues 620–624 (KMSKS). An ATP-binding site is contributed by Lys-623.

It belongs to the class-I aminoacyl-tRNA synthetase family.

The protein resides in the cytoplasm. It carries out the reaction tRNA(Leu) + L-leucine + ATP = L-leucyl-tRNA(Leu) + AMP + diphosphate. The protein is Leucine--tRNA ligase of Hahella chejuensis (strain KCTC 2396).